The sequence spans 398 residues: Isopenicillin N epimerase (398 aa).

N6-(pyridoxal phosphate)lysine is present on Lys-219. The disordered stretch occupies residues 243–264; the sequence is PQVSWGYRPDGENPSDERNRFG. A compositionally biased stretch (basic and acidic residues) spans 251–264; the sequence is PDGENPSDERNRFG.

Belongs to the class-V pyridoxal-phosphate-dependent aminotransferase family. The cofactor is pyridoxal 5'-phosphate.

The enzyme catalyses isopenicillin N = penicillin N. Its pathway is antibiotic biosynthesis; cephalosporin C biosynthesis. Its function is as follows. Catalyzes the reversible isomerization between isopenicillin N and penicillin N. The sequence is that of Isopenicillin N epimerase (cefD) from Amycolatopsis lactamdurans (Nocardia lactamdurans).